The chain runs to 141 residues: Large ribosomal subunit protein uL11 (141 aa).

It belongs to the universal ribosomal protein uL11 family. Part of the ribosomal stalk of the 50S ribosomal subunit. Interacts with L10 and the large rRNA to form the base of the stalk. L10 forms an elongated spine to which 2 L12 dimers bind in a sequential fashion forming a pentameric L10(L12)2(L12)2 complex. In stalled/isolated 50S subunits interacts with RqcH. In terms of processing, one or more lysine residues are methylated.

In terms of biological role, forms part of the ribosomal stalk which helps the ribosome interact with GTP-bound translation factors. Required to recruit RqcH, which is part of the ribosome quality control system (RQC), to stalled 50S ribosomal subunits. This Bacillus subtilis (strain 168) protein is Large ribosomal subunit protein uL11.